Reading from the N-terminus, the 179-residue chain is Shikimate kinase (179 aa).

22–27 (GTGKSS) contributes to the ATP binding site. Ser26 contacts Mg(2+). Residues Asp44, Arg68, and Gly90 each coordinate substrate. Residue Arg128 participates in ATP binding. Substrate is bound at residue Arg147.

Belongs to the shikimate kinase family. As to quaternary structure, monomer. Requires Mg(2+) as cofactor.

It is found in the cytoplasm. It catalyses the reaction shikimate + ATP = 3-phosphoshikimate + ADP + H(+). Its pathway is metabolic intermediate biosynthesis; chorismate biosynthesis; chorismate from D-erythrose 4-phosphate and phosphoenolpyruvate: step 5/7. Catalyzes the specific phosphorylation of the 3-hydroxyl group of shikimic acid using ATP as a cosubstrate. In Geobacter metallireducens (strain ATCC 53774 / DSM 7210 / GS-15), this protein is Shikimate kinase.